Consider the following 493-residue polypeptide: Membrane-bound lytic murein transglycosylase F (493 aa).

Residues Met1–Ala21 form the signal peptide. Residues Leu22–Val268 are non-LT domain. An LT domain region spans residues Gly269–Pro493. Glu313 is a catalytic residue.

In the N-terminal section; belongs to the bacterial solute-binding protein 3 family. This sequence in the C-terminal section; belongs to the transglycosylase Slt family.

Its subcellular location is the cell outer membrane. The enzyme catalyses Exolytic cleavage of the (1-&gt;4)-beta-glycosidic linkage between N-acetylmuramic acid (MurNAc) and N-acetylglucosamine (GlcNAc) residues in peptidoglycan, from either the reducing or the non-reducing ends of the peptidoglycan chains, with concomitant formation of a 1,6-anhydrobond in the MurNAc residue.. Murein-degrading enzyme that degrades murein glycan strands and insoluble, high-molecular weight murein sacculi, with the concomitant formation of a 1,6-anhydromuramoyl product. Lytic transglycosylases (LTs) play an integral role in the metabolism of the peptidoglycan (PG) sacculus. Their lytic action creates space within the PG sacculus to allow for its expansion as well as for the insertion of various structures such as secretion systems and flagella. The protein is Membrane-bound lytic murein transglycosylase F of Erwinia tasmaniensis (strain DSM 17950 / CFBP 7177 / CIP 109463 / NCPPB 4357 / Et1/99).